Consider the following 383-residue polypeptide: tRNA (adenine(58)-N(1))-methyltransferase catalytic subunit TRM61 (383 aa).

S-adenosyl-L-methionine contacts are provided by residues Val94, 121–124 (SGSF), Glu139, Arg144, 168–169 (DV), and Asp203. Ser302 is modified (phosphoserine).

Belongs to the class I-like SAM-binding methyltransferase superfamily. TRM61 family. In terms of assembly, heterotetramer; composed of two copies of TRM6/GCD10 and two copies of TRM61/GCD14.

Its subcellular location is the nucleus. It carries out the reaction adenosine(58) in tRNA + S-adenosyl-L-methionine = N(1)-methyladenosine(58) in tRNA + S-adenosyl-L-homocysteine + H(+). Its function is as follows. Catalytic subunit of tRNA (adenine-N(1)-)-methyltransferase, which catalyzes the formation of N(1)-methyladenine at position 58 (m1A58) in initiator methionyl-tRNA. GCD14 is also required for repression of GCN4 mRNA translation by the upstream open reading frames (uORFs) under conditions of amino acid sufficiency. This is tRNA (adenine(58)-N(1))-methyltransferase catalytic subunit TRM61 (GCD14) from Saccharomyces cerevisiae (strain ATCC 204508 / S288c) (Baker's yeast).